We begin with the raw amino-acid sequence, 130 residues long: Sirohydrochlorin cobaltochelatase (130 aa).

His12 functions as the Proton acceptor in the catalytic mechanism. His12 contacts Co(2+). His12 lines the Ni(2+) pocket. Residues Glu48 and Leu73–His78 each bind substrate. His78 lines the Co(2+) pocket. His78 provides a ligand contact to Ni(2+).

It belongs to the CbiX family. CbiXS subfamily. In terms of assembly, homotetramer; dimer of dimers.

It carries out the reaction Co-sirohydrochlorin + 2 H(+) = sirohydrochlorin + Co(2+). The catalysed reaction is Ni-sirohydrochlorin + 2 H(+) = sirohydrochlorin + Ni(2+). It functions in the pathway cofactor biosynthesis; adenosylcobalamin biosynthesis; cob(II)yrinate a,c-diamide from sirohydrochlorin (anaerobic route): step 1/10. Catalyzes the insertion of Co(2+) into sirohydrochlorin as part of the anaerobic pathway to cobalamin biosynthesis (Potential). Involved in the biosynthesis of the unique nickel-containing tetrapyrrole coenzyme F430, the prosthetic group of methyl-coenzyme M reductase (MCR), which plays a key role in methanogenesis and anaerobic methane oxidation. Catalyzes the insertion of Ni(2+) into sirohydrochlorin to yield Ni-sirohydrochlorin. The chain is Sirohydrochlorin cobaltochelatase from Methanosarcina acetivorans (strain ATCC 35395 / DSM 2834 / JCM 12185 / C2A).